We begin with the raw amino-acid sequence, 473 residues long: H(+)/Cl(-) exchange transporter ClcA (473 aa).

Over 1–32 (MKTDTSTFLAQQIVRLRRRDQIRRLMQRDKTP) the chain is Cytoplasmic. Residues 33-69 (LAILFMAAVVGTLTGLVGVAFEKAVSWVQNMRIGALV) form a helical membrane-spanning segment. The Periplasmic portion of the chain corresponds to 70–76 (QVADHAF). Residues 77-100 (LLWPLAFILSALLAMVGYFLVRKF) form a helical membrane-spanning segment. The short motif at 106 to 110 (GSGIP) is the Selectivity filter part_1 element. Residue S107 participates in chloride binding. Residues 109-116 (IPEIEGAL) constitute an intramembrane region (helical). Over 117-123 (EELRPVR) the chain is Cytoplasmic. The next 2 membrane-spanning stretches (helical) occupy residues 124-141 (WWRVLPVKFIGGMGTLGA) and 148-166 (EGPTVQIGGNLGRMVLDVF). A Selectivity filter part_2 motif is present at residues 146–150 (GREGP). Over 167-176 (RMRSAEARHT) the chain is Cytoplasmic. 2 intramembrane regions (helical) span residues 177 to 189 (LLATGAAAGLSAA) and 193 to 201 (PLAGILFII). Residues 202 to 214 (EEMRPQFRYNLIS) lie on the Cytoplasmic side of the membrane. Residues 215–232 (IKAVFTGVIMSSIVFRIF) form a helical membrane-spanning segment. At 233 to 252 (NGEAPIIEVGKLSDAPVNTL) the chain is on the periplasmic side. Residues 253-281 (WLYLILGIIFGCVGPVFNSLVLRTQDMFQ) form a helical membrane-spanning segment. At 282-287 (RFHGGE) the chain is on the cytoplasmic side. A helical transmembrane segment spans residues 288-309 (IKKWVLMGGAIGGLCGILGLIE). Residues 310–329 (PEAAGGGFNLIPIAAAGNFS) lie on the Periplasmic side of the membrane. 2 helical membrane passes run 330 to 349 (VGLLLFIFITRVVTTLLCFS) and 355 to 376 (GIFAPMLALGTLLGTAFGMAAA). A Selectivity filter part_3 motif is present at residues 355–359 (GIFAP). Residues I356 and F357 each contribute to the chloride site. Over 377-386 (VLFPQYHLEA) the chain is Periplasmic. Residues 387–401 (GTFAIAGMGALMAAS) constitute an intramembrane region (helical). The note=Loop between two helices intramembrane region spans 402 to 404 (VRA). The segment at residues 405-416 (PLTGIVLVLEMT) is an intramembrane region (helical). The segment at residues 417–421 (DNYQL) is an intramembrane region (note=Loop between two helices). A helical membrane pass occupies residues 422 to 438 (ILPMIITCLGATLLAQF). The Cytoplasmic portion of the chain corresponds to 439-473 (LGGKPLYSTILARTLAKQDAEQAAKNQNASAGENT). Y445 lines the chloride pocket.

This sequence belongs to the chloride channel (TC 2.A.49) family. ClcA subfamily. As to quaternary structure, homodimer.

The protein localises to the cell inner membrane. The catalysed reaction is 2 chloride(in) + H(+)(out) = 2 chloride(out) + H(+)(in). Its function is as follows. Proton-coupled chloride transporter. Functions as antiport system and exchanges two chloride ions for 1 proton. Probably acts as an electrical shunt for an outwardly-directed proton pump that is linked to amino acid decarboxylation, as part of the extreme acid resistance (XAR) response. In Salmonella choleraesuis (strain SC-B67), this protein is H(+)/Cl(-) exchange transporter ClcA.